A 313-amino-acid chain; its full sequence is Biotin synthase (313 aa).

The Radical SAM core domain maps to 38–262 (REVQISTLLS…TMPHARVRLS (225 aa)). [4Fe-4S] cluster-binding residues include Cys-53, Cys-57, and Cys-60. [2Fe-2S] cluster is bound by residues Cys-97, Cys-128, Cys-188, and Arg-260.

It belongs to the radical SAM superfamily. Biotin synthase family. Homodimer. [4Fe-4S] cluster is required as a cofactor. Requires [2Fe-2S] cluster as cofactor.

The enzyme catalyses (4R,5S)-dethiobiotin + (sulfur carrier)-SH + 2 reduced [2Fe-2S]-[ferredoxin] + 2 S-adenosyl-L-methionine = (sulfur carrier)-H + biotin + 2 5'-deoxyadenosine + 2 L-methionine + 2 oxidized [2Fe-2S]-[ferredoxin]. It functions in the pathway cofactor biosynthesis; biotin biosynthesis; biotin from 7,8-diaminononanoate: step 2/2. In terms of biological role, catalyzes the conversion of dethiobiotin (DTB) to biotin by the insertion of a sulfur atom into dethiobiotin via a radical-based mechanism. The protein is Biotin synthase of Granulibacter bethesdensis (strain ATCC BAA-1260 / CGDNIH1).